A 137-amino-acid polypeptide reads, in one-letter code: MPTINQLVRKGRKSKSSKSDAPALNYGYNSFKKAQVKNPAPQKRGVATRVGTMTPKKPNSALRKYARVRLSNLIEVTAYIPGIGHNLQEHSVVLIRGGRVKDLPGVRYHIIRGALDTAGVTDRRQGRSKYGTKKPKG.

A disordered region spans residues 1 to 23 (MPTINQLVRKGRKSKSSKSDAPA). D102 bears the 3-methylthioaspartic acid mark.

This sequence belongs to the universal ribosomal protein uS12 family. Part of the 30S ribosomal subunit. Contacts proteins S8 and S17. May interact with IF1 in the 30S initiation complex.

Functionally, with S4 and S5 plays an important role in translational accuracy. Interacts with and stabilizes bases of the 16S rRNA that are involved in tRNA selection in the A site and with the mRNA backbone. Located at the interface of the 30S and 50S subunits, it traverses the body of the 30S subunit contacting proteins on the other side and probably holding the rRNA structure together. The combined cluster of proteins S8, S12 and S17 appears to hold together the shoulder and platform of the 30S subunit. This Levilactobacillus brevis (strain ATCC 367 / BCRC 12310 / CIP 105137 / JCM 1170 / LMG 11437 / NCIMB 947 / NCTC 947) (Lactobacillus brevis) protein is Small ribosomal subunit protein uS12.